A 196-amino-acid polypeptide reads, in one-letter code: Neuropeptide prohormone-4 (196 aa).

The signal sequence occupies residues 1-25; the sequence is MSSPLRMDVTFLLAAIAVTWVCGLK. One can recognise an LDL-receptor class A domain in the interval 50–90; the sequence is DCDIASPFKCEESPTCLRLFQVCNGRWDCEHGSDEDNALCA. Disulfide bonds link Cys51–Cys65, Cys59–Cys78, and Cys72–Cys89.

As to expression, expressed by the venom duct.

Its subcellular location is the secreted. The sequence is that of Neuropeptide prohormone-4 from Conus victoriae (Queen Victoria cone).